The following is a 432-amino-acid chain: RNA exonuclease 4 (432 aa).

The span at 42–54 (ARKKAKKKFRKSK) shows a compositional bias: basic residues. Residues 42–177 (ARKKAKKKFR…AKKRTYSDIS (136 aa)) are disordered. Residues 121 to 137 (KASDKSKGDKQRTEKAK) show a composition bias toward basic and acidic residues. Ser-123 is modified (phosphoserine). Residue Lys-127 forms a Glycyl lysine isopeptide (Lys-Gly) (interchain with G-Cter in SUMO2) linkage. The region spanning 230–381 (KRLGQKKRTI…PSLKRLSEKI (152 aa)) is the Exonuclease domain.

It belongs to the REXO4 family. Can bind ESR1 and ESR2. This interaction is abrogated by estrogen and augmented by tamoxifen treatment.

The protein resides in the nucleus. The protein localises to the nucleolus. Its function is as follows. May function as an exonuclease. The polypeptide is RNA exonuclease 4 (Rexo4) (Mus musculus (Mouse)).